Here is a 691-residue protein sequence, read N- to C-terminus: Elongation factor G (691 aa).

The tr-type G domain maps to glutamate 8 to leucine 283. Residues alanine 17–threonine 24, aspartate 81–histidine 85, and asparagine 135–aspartate 138 each bind GTP.

Belongs to the TRAFAC class translation factor GTPase superfamily. Classic translation factor GTPase family. EF-G/EF-2 subfamily.

Its subcellular location is the cytoplasm. Its function is as follows. Catalyzes the GTP-dependent ribosomal translocation step during translation elongation. During this step, the ribosome changes from the pre-translocational (PRE) to the post-translocational (POST) state as the newly formed A-site-bound peptidyl-tRNA and P-site-bound deacylated tRNA move to the P and E sites, respectively. Catalyzes the coordinated movement of the two tRNA molecules, the mRNA and conformational changes in the ribosome. The sequence is that of Elongation factor G from Lawsonia intracellularis (strain PHE/MN1-00).